Reading from the N-terminus, the 106-residue chain is Foxo1-corepressor (106 aa).

Residues 1–44 (MGGPTRRHQEEGSAECLGGPSTRAAPGPGLRDFHFTTAGPSKAD) are disordered. The Nuclear export signal motif lies at 78–87 (IGTLYIRLDL). Thr-93 carries the phosphothreonine; by PKA modification.

As to quaternary structure, interacts with FOXO1 (via N-terminal domain); the interaction is direct, occurs in a forskolin-independent manner that prevents SIRT1 binding to FOXO1. Interacts with FOXO3. Does not interact with FOXO4. Post-translationally, phosphorylated at Thr-93 by PKA, leading to import into the nucleus. Expressed in adipocytes. Expressed in brown and white adipose tissue but not in liver. Protein levels in brown and white adipose tissues decrease following fasting (at protein level). Expressed in white and brown adipose tissues. Expressed in adipocytes. Not expressed in liver, skeletal muscle and brain.

It localises to the cytoplasm. The protein localises to the cytosol. It is found in the nucleus. Regulator of adipocytes that acts by repressing FOXO1 transcriptional activity. Acts by promoting acetylation of FOXO1, both by preventing the interaction between FOXO1 and SIRT1 deacetylase, and by mediating acetyltransferase activity in vitro. Regulates insulin sensitivity and energy metabolism. The sequence is that of Foxo1-corepressor (Fcor) from Mus musculus (Mouse).